A 450-amino-acid polypeptide reads, in one-letter code: Probable rhamnogalacturonase E (450 aa).

An N-terminal signal peptide occupies residues M1–A22. An intrachain disulfide couples C43 to C69. N-linked (GlcNAc...) asparagine glycosylation is found at N54, N92, and N131. Catalysis depends on D222, which acts as the Proton donor. An intrachain disulfide couples C224 to C241. N-linked (GlcNAc...) asparagine glycans are attached at residues N242 and N257. H297 is an active-site residue. N-linked (GlcNAc...) asparagine glycosylation is found at N324 and N329. 2 cysteine pairs are disulfide-bonded: C347-C353 and C375-C384.

This sequence belongs to the glycosyl hydrolase 28 family.

Its subcellular location is the secreted. In terms of biological role, pectinolytic enzymes consist of four classes of enzymes: pectine lyase, polygalacturonase, pectin methylesterase and rhamnogalacturonase. Hydrolyzes alpha-D-galacturonopyranosyl-(1,2)-alpha-L-rhamnopyranosyl linkages in the backbone of the hairy regions of pectins. The polypeptide is Probable rhamnogalacturonase E (rhgE) (Aspergillus niger).